The primary structure comprises 491 residues: Mitochondrial distribution and morphology protein 12 (491 aa).

Residues 1-491 form the SMP-LTD domain; the sequence is MSIDLNWEAA…VFPSYWTFLV (491 aa). The segment covering 72–82 has biased composition (acidic residues); that stretch reads ESDSSEDEDGE. 3 disordered regions span residues 72-123, 201-313, and 389-434; these read ESDS…NHHD, GWPD…MRER, and GDED…QPRR. Composition is skewed to basic and acidic residues over residues 83 to 123 and 213 to 229; these read GHDA…NHHD and MTDH…HNKN. The segment covering 230–249 has biased composition (polar residues); the sequence is ETGSPSRPSTAHTNPTQLSH. The segment covering 252-262 has biased composition (low complexity); sequence SAASSSNNTSN. A compositionally biased stretch (polar residues) spans 270–279; sequence DHTSSTTATT. The segment covering 400–421 has biased composition (low complexity); that stretch reads STANTTTAASGSSTDNNNNNNE.

The protein belongs to the MDM12 family. As to quaternary structure, component of the ER-mitochondria encounter structure (ERMES) or MDM complex, composed of mmm1, mdm10, mdm12 and mdm34. A mmm1 homodimer associates with one molecule of mdm12 on each side in a pairwise head-to-tail manner, and the SMP-LTD domains of mmm1 and mdm12 generate a continuous hydrophobic tunnel for phospholipid trafficking.

Its subcellular location is the mitochondrion outer membrane. It is found in the endoplasmic reticulum membrane. Its function is as follows. Component of the ERMES/MDM complex, which serves as a molecular tether to connect the endoplasmic reticulum (ER) and mitochondria. Components of this complex are involved in the control of mitochondrial shape and protein biogenesis, and function in nonvesicular lipid trafficking between the ER and mitochondria. Mdm12 is required for the interaction of the ER-resident membrane protein mmm1 and the outer mitochondrial membrane-resident beta-barrel protein mdm10. The mdm12-mmm1 subcomplex functions in the major beta-barrel assembly pathway that is responsible for biogenesis of all mitochondrial outer membrane beta-barrel proteins, and acts in a late step after the SAM complex. The mdm10-mdm12-mmm1 subcomplex further acts in the TOM40-specific pathway after the action of the mdm12-mmm1 complex. Essential for establishing and maintaining the structure of mitochondria and maintenance of mtDNA nucleoids. The protein is Mitochondrial distribution and morphology protein 12 of Talaromyces stipitatus (strain ATCC 10500 / CBS 375.48 / QM 6759 / NRRL 1006) (Penicillium stipitatum).